Here is a 198-residue protein sequence, read N- to C-terminus: Recombination protein RecR (198 aa).

The segment at Cys-57–Cys-72 adopts a C4-type zinc-finger fold. Residues Ser-80–Ser-175 form the Toprim domain.

This sequence belongs to the RecR family.

Its function is as follows. May play a role in DNA repair. It seems to be involved in an RecBC-independent recombinational process of DNA repair. It may act with RecF and RecO. The chain is Recombination protein RecR from Staphylococcus haemolyticus (strain JCSC1435).